The sequence spans 75 residues: Sec-independent protein translocase protein TatA (75 aa).

The chain crosses the membrane as a helical span at residues Met1–Gly21.

Belongs to the TatA/E family. The Tat system comprises two distinct complexes: a TatABC complex, containing multiple copies of TatA, TatB and TatC subunits, and a separate TatA complex, containing only TatA subunits. Substrates initially bind to the TatABC complex, which probably triggers association of the separate TatA complex to form the active translocon.

Its subcellular location is the cell inner membrane. In terms of biological role, part of the twin-arginine translocation (Tat) system that transports large folded proteins containing a characteristic twin-arginine motif in their signal peptide across membranes. TatA could form the protein-conducting channel of the Tat system. The sequence is that of Sec-independent protein translocase protein TatA from Haemophilus influenzae (strain PittEE).